Consider the following 118-residue polypeptide: Protein TusC (118 aa).

Belongs to the DsrF/TusC family. In terms of assembly, heterohexamer, formed by a dimer of trimers. The hexameric TusBCD complex contains 2 copies each of TusB, TusC and TusD. The TusBCD complex interacts with TusE.

The protein localises to the cytoplasm. Part of a sulfur-relay system required for 2-thiolation of 5-methylaminomethyl-2-thiouridine (mnm(5)s(2)U) at tRNA wobble positions. The chain is Protein TusC from Salmonella arizonae (strain ATCC BAA-731 / CDC346-86 / RSK2980).